A 467-amino-acid polypeptide reads, in one-letter code: Repressible acid phosphatase (467 aa).

The signal sequence occupies residues 1 to 17; it reads MFKSVVYSILAASLANA. The Nucleophile role is filled by His-75. Asn-97, Asn-103, Asn-162, Asn-192, Asn-250, and Asn-315 each carry an N-linked (GlcNAc...) asparagine glycan. Catalysis depends on Asp-338, which acts as the Proton donor. Residues Asn-356, Asn-390, Asn-439, Asn-445, Asn-456, and Asn-461 are each glycosylated (N-linked (GlcNAc...) asparagine).

This sequence belongs to the histidine acid phosphatase family. Glycosylated during secretion across the membrane.

The protein localises to the secreted. It carries out the reaction a phosphate monoester + H2O = an alcohol + phosphate. Its function is as follows. Partially mediates extracellular nucleotide derived phosphate hydrolysis along with NPP1 and NPP2. The polypeptide is Repressible acid phosphatase (PHO5) (Saccharomyces cerevisiae (strain ATCC 204508 / S288c) (Baker's yeast)).